A 328-amino-acid chain; its full sequence is Gonadotropin-releasing hormone receptor (328 aa).

The Extracellular portion of the chain corresponds to 1-38 (MANSASPEQNQNHCSAINNSIPLMQGNLPTLTLSGKIR). An N-linked (GlcNAc...) asparagine glycan is attached at Asn-18. A helical transmembrane segment spans residues 39 to 58 (VTVTFFLFLLSATFNASFLL). Residues 59–77 (KLQKWTQKKEKGKKLSRMK) lie on the Cytoplasmic side of the membrane. The helical transmembrane segment at 78-97 (LLLKHLTLANLLETLIVMPL) threads the bilayer. At 98–115 (DGMWNITVQWYAGELLCK) the chain is on the extracellular side. Asn-102 is a glycosylation site (N-linked (GlcNAc...) asparagine). Residues Cys-114 and Cys-196 are joined by a disulfide bond. Residues 116–137 (VLSYLKLFSMYAPAFMMVVISL) form a helical membrane-spanning segment. Over 138–164 (DRSLAITRPLALKSNSKVGQSMVGLAW) the chain is Cytoplasmic. A helical transmembrane segment spans residues 165-184 (ILSSVFAGPQLYIFRMIHLA). The Extracellular portion of the chain corresponds to 185–212 (DSSGQTKVFSQCVTHCSFSQWWHQAFYN). The chain crosses the membrane as a helical span at residues 213–232 (FFTFSCLFIIPLFIMLICNA). Over 233–281 (KIIFTLTRVLHQDPHELQLNQSKNNIPRARLKTLKMTVAFATSFTVCWT) the chain is Cytoplasmic. A helical transmembrane segment spans residues 282 to 300 (PYYVLGIWYWFDPEMLNRL). The Extracellular segment spans residues 301–306 (SDPVNH). Residues 307 to 326 (FFFLFAFLNPCFDPLIYGYF) form a helical membrane-spanning segment. Residues 327-328 (SL) lie on the Cytoplasmic side of the membrane.

It belongs to the G-protein coupled receptor 1 family. In terms of tissue distribution, pituitary, ovary, testis, breast and prostate but not in liver and spleen.

It is found in the cell membrane. Receptor for gonadotropin releasing hormone (GnRH) that mediates the action of GnRH to stimulate the secretion of the gonadotropic hormones luteinizing hormone (LH) and follicle-stimulating hormone (FSH). This receptor mediates its action by association with G-proteins that activate a phosphatidylinositol-calcium second messenger system. Isoform 2 may act as an inhibitor of GnRH-R signaling. The protein is Gonadotropin-releasing hormone receptor (GNRHR) of Homo sapiens (Human).